Consider the following 2153-residue polypeptide: RNA-directed RNA polymerase L (2153 aa).

Residues H36, E54, D97, E110, and V111 each coordinate Mn(2+). K124 functions as the For endonuclease activity in the catalytic mechanism. Positions 957–1143 constitute a RdRp catalytic domain; it reads TGKKIRFKRK…AVNQEMWKSM (187 aa). D1100 provides a ligand contact to Mg(2+).

Belongs to the Bunyavirales RNA polymerase family. Interacts with the viral nucleoprotein. Mn(2+) is required as a cofactor. Mg(2+) serves as cofactor.

Its subcellular location is the host cytoplasm. The protein resides in the host perinuclear region. It catalyses the reaction RNA(n) + a ribonucleoside 5'-triphosphate = RNA(n+1) + diphosphate. RNA-dependent RNA polymerase, which is responsible for the replication and transcription of the viral RNA genome using antigenomic RNA as an intermediate. During transcription, synthesizes subgenomic RNAs and assures their capping by a cap-snatching mechanism, which involves the endonuclease activity cleaving the host capped pre-mRNAs. These short capped RNAs are then used as primers for viral transcription. Cleaves ssRNA substrates but not DNA. Seems to downregulate the expression of its own and heterologous mRNAs through its endonuclease activity. The sequence is that of RNA-directed RNA polymerase L from Black Creek Canal orthohantavirus (BCCV).